We begin with the raw amino-acid sequence, 467 residues long: Putative odorant receptor 85e (467 aa).

Topologically, residues 1–60 (MASLQFHGNVDADIRYDISLDPARESNLFRLLMGLQLANGTKPSPRLPKWWPKRLEMIGK) are cytoplasmic. Residues 61 to 81 (VLPKAYCSMVIFTSLHLGVLF) traverse the membrane as a helical segment. The Extracellular segment spans residues 82-98 (TKTTLDVLPTGELQAIT). The helical transmembrane segment at 99 to 119 (DALTMTIIYFFTGYGTIYWCL) threads the bilayer. Topologically, residues 120-159 (RSRRLLAYMEHMNREYRHHSLAGVTFVSSHAAFRMSRNFT) are cytoplasmic. A helical membrane pass occupies residues 160-180 (VVWIMSCLLGVISWGVSPLML). The Extracellular segment spans residues 181 to 212 (GIRMLPLQCWYPFDALGPGTYTAVYATQLFGQ). The chain crosses the membrane as a helical span at residues 213–233 (IMVGMTFGFGGSLFVTLSLLL). The Cytoplasmic portion of the chain corresponds to 234-286 (LGQFDVLYCSLKNLDAHTKLLGGESVNGLSSLQEELLLGDSKRELNQYVLLQE). Residues 287-307 (HPTDLLRLSAGRKCPDQGNAF) form a helical membrane-spanning segment. Topologically, residues 308-334 (HNALVECIRLHRFILHCSQELENLFSP) are extracellular. The chain crosses the membrane as a helical span at residues 335 to 355 (YCLVKSLQITFQLCLLVFVGV). Over 356–367 (SGTREVLRIVNQ) the chain is Cytoplasmic. The helical transmembrane segment at 368 to 388 (LQYLGLTIFELLMFTYCGELL) threads the bilayer. Topologically, residues 389-467 (SRHSIRSGDA…LAAKKTESEL (79 aa)) are extracellular.

Belongs to the insect chemoreceptor superfamily. Heteromeric odorant receptor channel (TC 1.A.69) family. Or2a subfamily. As to quaternary structure, interacts with Orco. Complexes exist early in the endomembrane system in olfactory sensory neurons (OSNs), coupling these complexes to the conserved ciliary trafficking pathway. As to expression, expressed in 15% of the 120 sensory neurons within the maxillary palp.

It is found in the cell membrane. Functionally, odorant receptor which mediates acceptance or avoidance behavior, depending on its substrates. The odorant receptor repertoire encodes a large collection of odor stimuli that vary widely in identity, intensity, and duration. May form a complex with Orco to form odorant-sensing units, providing sensitive and prolonged odorant signaling and calcium permeability. The chain is Putative odorant receptor 85e (Or85e) from Drosophila melanogaster (Fruit fly).